A 191-amino-acid polypeptide reads, in one-letter code: MNIYTSILVLSYLIGSIPFGLILSYIGGLGDIRKIGSGNIGATNVFRKSKKLAVVTLILDSLKGFVSVMLAKNFSSDQTFVFMSALFSIIGHMFPVWLSFKGGKGVATLLGSIMFIEYKFVIYFTIFWIIVFVIFRYSSLSSIISTISIMLLVYTHYSANESITFLVMSLLVIVQHIENIVRIIKGKENKI.

6 helical membrane-spanning segments follow: residues 7-27, 51-71, 80-100, 115-135, 139-159, and 161-181; these read ILVL…SYIG, KLAV…VMLA, FVFM…WLSF, FIEY…FVIF, SLSS…HYSA, and ESIT…ENIV.

It belongs to the PlsY family. As to quaternary structure, probably interacts with PlsX.

Its subcellular location is the cell inner membrane. It carries out the reaction an acyl phosphate + sn-glycerol 3-phosphate = a 1-acyl-sn-glycero-3-phosphate + phosphate. It functions in the pathway lipid metabolism; phospholipid metabolism. Catalyzes the transfer of an acyl group from acyl-phosphate (acyl-PO(4)) to glycerol-3-phosphate (G3P) to form lysophosphatidic acid (LPA). This enzyme utilizes acyl-phosphate as fatty acyl donor, but not acyl-CoA or acyl-ACP. The sequence is that of Glycerol-3-phosphate acyltransferase from Ehrlichia canis (strain Jake).